A 549-amino-acid chain; its full sequence is Glucose-6-phosphate isomerase (549 aa).

N6-acetyllysine is present on residues Lys80, Lys228, and Lys234. Catalysis depends on Glu355, which acts as the Proton donor. Catalysis depends on residues His386 and Lys514.

This sequence belongs to the GPI family.

It localises to the cytoplasm. It catalyses the reaction alpha-D-glucose 6-phosphate = beta-D-fructose 6-phosphate. Its pathway is carbohydrate biosynthesis; gluconeogenesis. It participates in carbohydrate degradation; glycolysis; D-glyceraldehyde 3-phosphate and glycerone phosphate from D-glucose: step 2/4. In terms of biological role, catalyzes the reversible isomerization of glucose-6-phosphate to fructose-6-phosphate. This is Glucose-6-phosphate isomerase from Escherichia coli O17:K52:H18 (strain UMN026 / ExPEC).